We begin with the raw amino-acid sequence, 772 residues long: Hyperosmolality-gated Ca2+ permeable channel 1.1 (772 aa).

Residues 1–5 (MATLK) are Extracellular-facing. A helical transmembrane segment spans residues 6–28 (DIGVSAGINILTAFIFFIIFAFL). The Cytoplasmic segment spans residues 29 to 100 (RLQPFNDRVY…AGLDSVVYLR (72 aa)). Residues 101–122 (IYWLGLKIFAPIAMLAWAVLVP) form a helical membrane-spanning segment. At 123–159 (VNWTNNELELAKHFKNVTSSDIDKLTISNIPEGSNRF) the chain is on the extracellular side. N-linked (GlcNAc) asparagine glycosylation is present at asparagine 138. The helical transmembrane segment at 160–180 (WAHIIMAYAFTIWTCYMLMKE) threads the bilayer. Residues 181-372 (YETVANMRLQ…PNLAIPYVSL (192 aa)) lie on the Cytoplasmic side of the membrane. The tract at residues 339–344 (QTTQTR) is cytoplasmic region required for homodimerization. Residues 373–398 (TVRRLVMNVAFFFLTFFFIIPIAFVQ) traverse the membrane as a helical segment. Over 399–424 (SLATIEGIEKVAPFLKVIIEKDFIKS) the chain is Extracellular. A helical membrane pass occupies residues 425–450 (LIQGLLAGIALKLFLIFLPAILMTMS). At 451–461 (KFEGFTSVSFL) the chain is on the cytoplasmic side. A helical membrane pass occupies residues 462 to 485 (ERRSASRYYIFNLVNVFLGSVIAG). Topologically, residues 486–509 (AAFEQLNSFLNQSPNQIPKTIGMA) are extracellular. Residues 510–538 (IPMKATFFITYIMVDGWAGVAGEILMLKP) form a helical membrane-spanning segment. Over 539-566 (LIIYHLKNAFLVKTEKDREEAMNPGSIG) the chain is Cytoplasmic. Residues 567-587 (FNTGEPQIQLYFLLGLVYAPV) traverse the membrane as a helical segment. Threonine 588 is a topological domain (extracellular). A helical transmembrane segment spans residues 589-606 (PMLLPFILVFFALAYVVY). Residues 607-624 (RHQIINVYNQEYESAAAF) lie on the Cytoplasmic side of the membrane. The chain crosses the membrane as a helical span at residues 625 to 647 (WPDVHGRVITALIISQLLLMGLL). Residues 648–653 (GTKHAA) are Extracellular-facing. The helical transmembrane segment at 654 to 674 (SAAPFLIALPVITIGFHRFCK) threads the bilayer. Over 675 to 772 (GRFEPAFVRY…SLAVINGKEV (98 aa)) the chain is Cytoplasmic. Positions 686-688 (LQE) are cytoplasmic region required for homodimerization. A disordered region spans residues 743–772 (KRQSRRNTPAPSRISGESSPSLAVINGKEV). A compositionally biased stretch (polar residues) spans 748–763 (RNTPAPSRISGESSPS).

This sequence belongs to the CSC1 (TC 1.A.17) family. Homodimer. Expressed in leaves, flowers, roots and guard cells.

The protein resides in the cell membrane. Activated by mechanical pressure. Acts as a hyperosmolarity-gated non-selective cation channel that permeates Ca(2+) ions. Shows the following permeability sequence: K(+) &gt; Ba(2+) = Ca(2+) &gt; Na(+) = Mg(2+) = Cs(+). Mechanosensitive ion channel that converts mechanical stimuli into a flow of ions: activated in response to membrane stretch and poke. In Arabidopsis thaliana (Mouse-ear cress), this protein is Hyperosmolality-gated Ca2+ permeable channel 1.1.